Consider the following 415-residue polypeptide: Phosphoglycerate kinase (415 aa).

Residues valine 22, aspartate 23, phenylalanine 24, asparagine 25, glutamine 37, arginine 38, serine 61, histidine 62, glycine 64, leucine 120, arginine 121, histidine 168, and arginine 169 each contribute to the (2R)-3-phosphoglycerate site. Glycine 212 is an ADP binding site. Glycine 212 contacts CDP. AMP contacts are provided by alanine 213 and lysine 214. Residue alanine 213 coordinates ATP. Position 213 (alanine 213) interacts with Mg(2+). Aspartate 217 serves as a coordination point for CDP. A Mg(2+)-binding site is contributed by aspartate 217. Lysine 218 contacts AMP. Lysine 218 contacts ATP. Glycine 236 lines the ADP pocket. Glycine 236 contributes to the CDP binding site. Positions 237 and 311 each coordinate AMP. 2 residues coordinate ATP: glycine 237 and glycine 311. CDP contacts are provided by glycine 336 and phenylalanine 341. Phenylalanine 341 lines the ADP pocket. Glutamate 342 is a binding site for AMP. Residues glutamate 342, aspartate 373, and threonine 374 each contribute to the ATP site. Aspartate 373 serves as a coordination point for Mg(2+).

Belongs to the phosphoglycerate kinase family. As to quaternary structure, monomer. The cofactor is Mg(2+).

The protein resides in the cytoplasm. It catalyses the reaction (2R)-3-phosphoglycerate + ATP = (2R)-3-phospho-glyceroyl phosphate + ADP. Its pathway is carbohydrate degradation; glycolysis; pyruvate from D-glyceraldehyde 3-phosphate: step 2/5. This is Phosphoglycerate kinase (PGK) from Opisthorchis sinensis (Clonorchis sinensis).